The sequence spans 160 residues: Cytochrome b6-f complex subunit 4 (160 aa).

Transmembrane regions (helical) follow at residues 36 to 56 (LLYIFPVVILGTIACNVGLAV), 95 to 115 (LLGVLLMVSVPAGLLTVPFLE), and 131 to 151 (TVFLIGTAVALWLGIGATLPI).

Belongs to the cytochrome b family. PetD subfamily. The 4 large subunits of the cytochrome b6-f complex are cytochrome b6, subunit IV (17 kDa polypeptide, petD), cytochrome f and the Rieske protein, while the 4 small subunits are petG, petL, petM and petN. The complex functions as a dimer.

The protein localises to the plastid. Its subcellular location is the chloroplast thylakoid membrane. In terms of biological role, component of the cytochrome b6-f complex, which mediates electron transfer between photosystem II (PSII) and photosystem I (PSI), cyclic electron flow around PSI, and state transitions. The polypeptide is Cytochrome b6-f complex subunit 4 (Solanum bulbocastanum (Wild potato)).